Reading from the N-terminus, the 236-residue chain is Baculoviral IAP repeat-containing protein 8 (236 aa).

One copy of the BIR repeat lies at 7-70 (WLITFGTWMY…KWYPGCKYLL (64 aa)). Residues Cys39, Cys42, His59, and Cys66 each contribute to the Zn(2+) site. The segment at 189-224 (CKICMDRHIAVVFIPCGHLVTCKQCAEAVDRCPMCN) adopts an RING-type zinc-finger fold.

Belongs to the IAP family. Binds to caspase-9.

Its subcellular location is the cytoplasm. In terms of biological role, protects against apoptosis mediated by BAX. This Gorilla gorilla gorilla (Western lowland gorilla) protein is Baculoviral IAP repeat-containing protein 8 (BIRC8).